Reading from the N-terminus, the 172-residue chain is Large ribosomal subunit protein uL10 (172 aa).

It belongs to the universal ribosomal protein uL10 family. In terms of assembly, part of the ribosomal stalk of the 50S ribosomal subunit. The N-terminus interacts with L11 and the large rRNA to form the base of the stalk. The C-terminus forms an elongated spine to which L12 dimers bind in a sequential fashion forming a multimeric L10(L12)X complex.

Its function is as follows. Forms part of the ribosomal stalk, playing a central role in the interaction of the ribosome with GTP-bound translation factors. The chain is Large ribosomal subunit protein uL10 from Nitrobacter winogradskyi (strain ATCC 25391 / DSM 10237 / CIP 104748 / NCIMB 11846 / Nb-255).